Consider the following 138-residue polypeptide: Ribulose bisphosphate carboxylase small subunit (138 aa).

Belongs to the RuBisCO small chain family. As to quaternary structure, heterohexadecamer of 8 large and 8 small subunits.

It localises to the plastid. The protein localises to the chloroplast. In terms of biological role, ruBisCO catalyzes two reactions: the carboxylation of D-ribulose 1,5-bisphosphate, the primary event in carbon dioxide fixation, as well as the oxidative fragmentation of the pentose substrate in the photorespiration process. Both reactions occur simultaneously and in competition at the same active site. Although the small subunit is not catalytic it is essential for maximal activity. The protein is Ribulose bisphosphate carboxylase small subunit of Porphyridium aerugineum (Red microalga).